A 459-amino-acid polypeptide reads, in one-letter code: Cysteine--tRNA ligase (459 aa).

Cys-28 serves as a coordination point for Zn(2+). Residues 30 to 40 (VTVYDLCHFGH) carry the 'HIGH' region motif. Cys-209, His-234, and Glu-238 together coordinate Zn(2+). The 'KMSKS' region signature appears at 266 to 270 (KMSKS). Lys-269 contacts ATP.

It belongs to the class-I aminoacyl-tRNA synthetase family. As to quaternary structure, monomer. Zn(2+) serves as cofactor.

It localises to the cytoplasm. The catalysed reaction is tRNA(Cys) + L-cysteine + ATP = L-cysteinyl-tRNA(Cys) + AMP + diphosphate. The protein is Cysteine--tRNA ligase of Actinobacillus pleuropneumoniae serotype 5b (strain L20).